The chain runs to 515 residues: Serine--tRNA ligase, cytoplasmic (515 aa).

Positions 9 to 61 are interaction with tRNA; that stretch reads RTDKGGDPEIIRETQRKRFKDVSLVDKLVQADTEWRKCRFTADNLNKAKNLCS. Threonine 271 and arginine 302 together coordinate L-serine. ATP is bound by residues 302-304 and 318-321; these read RQE and VHQF. Glutamate 325 provides a ligand contact to L-serine. 391–394 provides a ligand contact to ATP; sequence ELVS. Asparagine 427 contributes to the L-serine binding site. Positions 475–515 are disordered; the sequence is PIDQETTKKQKKQQEGGKKKKHQGGDADLENKVENMSVNDS. Residues 479–507 show a composition bias toward basic and acidic residues; sequence ETTKKQKKQQEGGKKKKHQGGDADLENKV. The short motif at 482–494 is the Nuclear localization signal element; the sequence is KKQKKQQEGGKKK.

The protein belongs to the class-II aminoacyl-tRNA synthetase family. Type-1 seryl-tRNA synthetase subfamily.

Its subcellular location is the cytoplasm. The protein localises to the nucleus. It carries out the reaction tRNA(Ser) + L-serine + ATP = L-seryl-tRNA(Ser) + AMP + diphosphate + H(+). It catalyses the reaction tRNA(Sec) + L-serine + ATP = L-seryl-tRNA(Sec) + AMP + diphosphate + H(+). In terms of biological role, catalyzes the attachment of serine to tRNA(Ser) in a two-step reaction: serine is first activated by ATP to form Ser-AMP and then transferred to the acceptor end of tRNA(Ser). Is probably also able to aminoacylate tRNA(Sec) with serine, to form the misacylated tRNA L-seryl-tRNA(Sec), which will be further converted into selenocysteinyl-tRNA(Sec). In the nucleus, binds to the vegfa core promoter and prevents myc binding and transcriptional activation by myc. Thereby inhibits the production of vegfa and sprouting angiogenesis mediated by vegfa. The sequence is that of Serine--tRNA ligase, cytoplasmic (sars1) from Danio rerio (Zebrafish).